The primary structure comprises 366 residues: Growth hormone secretagogue receptor type 1 (366 aa).

The Extracellular segment spans residues 1-40 (MWNATPSEEPGPNLTLPDLGWDAPPENDSLVEELLPLFPT). 2 N-linked (GlcNAc...) asparagine glycosylation sites follow: Asn-13 and Asn-27. A helical membrane pass occupies residues 41 to 66 (PLLAGVTATCVALFVVGIAGNLLTML). At 67 to 72 (VVSRFR) the chain is on the cytoplasmic side. A helical transmembrane segment spans residues 73–96 (EMRTTTNLYLSSMAFSDLLIFLCM). Residues 97–117 (PLDLFRLWQYRPWNLGNLLCK) are Extracellular-facing. Cys-116 and Cys-198 are joined by a disulfide. A helical transmembrane segment spans residues 118–139 (LFQFVSESCTYATVLTITALSV). Residues 140–162 (ERYFAICFPLRAKVVVTKGRVKL) are Cytoplasmic-facing. Residues 163 to 183 (VILVIWAVAFCSAGPIFVLVG) form a helical membrane-spanning segment. The Extracellular portion of the chain corresponds to 184–211 (VEHDNGTDPRDTNECRATEFAVRSGLLT). A helical transmembrane segment spans residues 212–235 (VMVWVSSVFFFLPVFCLTVLYSLI). Residues 236-263 (GRKLWRRKRGEAAVGSSLRDQNHKQTVK) lie on the Cytoplasmic side of the membrane. A helical transmembrane segment spans residues 264 to 285 (MLAVVVFAFILCWLPFHVGRYL). The Extracellular portion of the chain corresponds to 286–302 (FSKSLEPGSVEIAQISQ). The helical transmembrane segment at 303–326 (YCNLVSFVLFYLSAAINPILYNIM) threads the bilayer. At 327-366 (SKKYRVAVFKLLGFEPFSQRKLSTLKDESSRAWTESSINT) the chain is on the cytoplasmic side.

This sequence belongs to the G-protein coupled receptor 1 family. Pituitary and hypothalamus.

It localises to the cell membrane. In terms of biological role, receptor for ghrelin, coupled to G-alpha-11 proteins. Stimulates growth hormone secretion. Also binds other growth hormone releasing peptides (GHRP) (e.g. Met-enkephalin and GHRP-6) as well as non-peptide, low molecular weight secretagogues (e.g. L-692,429, MK-0677, adenosine). This is Growth hormone secretagogue receptor type 1 (GHSR) from Sus scrofa (Pig).